Here is a 196-residue protein sequence, read N- to C-terminus: Deoxyribose-phosphate aldolase (196 aa).

D91 functions as the Proton donor/acceptor in the catalytic mechanism. The active-site Schiff-base intermediate with acetaldehyde is the K153. The active-site Proton donor/acceptor is K182.

This sequence belongs to the DeoC/FbaB aldolase family. DeoC type 1 subfamily.

The protein resides in the cytoplasm. It catalyses the reaction 2-deoxy-D-ribose 5-phosphate = D-glyceraldehyde 3-phosphate + acetaldehyde. The protein operates within carbohydrate degradation; 2-deoxy-D-ribose 1-phosphate degradation; D-glyceraldehyde 3-phosphate and acetaldehyde from 2-deoxy-alpha-D-ribose 1-phosphate: step 2/2. In terms of biological role, catalyzes a reversible aldol reaction between acetaldehyde and D-glyceraldehyde 3-phosphate to generate 2-deoxy-D-ribose 5-phosphate. This chain is Deoxyribose-phosphate aldolase, found in Mycoplasma mycoides subsp. mycoides SC (strain CCUG 32753 / NCTC 10114 / PG1).